The chain runs to 397 residues: MSNSYVLVINSGSSSLKFAVIDSQTGEALISGLGECFGMPEAVISWKYQGEKTEEAITAADHHHQHAINRIVGLMESLGFAQDLVAVGHRIVHGGEKFTSTVRIDEEVLAEIESLSDLAPLHNPAGAIGIQAAMAAFPSLPQFAVFDTAFHQTMPKKAFTGAISHELYKQYGIRRYGFHGTSHYYVSREAAKMLNKPIEQASFISVHLGNGASVCAISNGQSVDTSMGFTPLAGLMMGTRSGDLDPGIIEFLMKKGWSQEKVFETLNKKSGFLGVSGLTSDARGILEAMENGHEGAKLAFEVFTYRVAKYIGSYLIPLDHLDAIIFTGGIGENSLPIRREILGNLKLLGFVEDEKGNEAARFGKAGIIAKSELLNAVAMVIPTNEEFVIAQQSVELL.

A Mg(2+)-binding site is contributed by asparagine 10. ATP is bound at residue lysine 17. Residue arginine 90 coordinates substrate. The Proton donor/acceptor role is filled by aspartate 147. ATP-binding positions include 207 to 211 (HLGNG), 281 to 283 (DAR), and 329 to 333 (GIGEN). Glutamate 385 contacts Mg(2+).

The protein belongs to the acetokinase family. In terms of assembly, homodimer. Mg(2+) is required as a cofactor. Requires Mn(2+) as cofactor.

The protein resides in the cytoplasm. It catalyses the reaction acetate + ATP = acetyl phosphate + ADP. It functions in the pathway metabolic intermediate biosynthesis; acetyl-CoA biosynthesis; acetyl-CoA from acetate: step 1/2. Catalyzes the formation of acetyl phosphate from acetate and ATP. Can also catalyze the reverse reaction. The sequence is that of Acetate kinase 2 from Vibrio cholerae serotype O1 (strain ATCC 39315 / El Tor Inaba N16961).